Consider the following 306-residue polypeptide: Mycothiol acetyltransferase (306 aa).

N-acetyltransferase domains follow at residues 17–163 (VARV…RPMP) and 166–306 (LALS…YRRA). Glu-48 is a binding site for 1D-myo-inositol 2-(L-cysteinylamino)-2-deoxy-alpha-D-glucopyranoside. Residue 89–91 (IVV) participates in acetyl-CoA binding. Residues Glu-192, Lys-232, and Glu-239 each contribute to the 1D-myo-inositol 2-(L-cysteinylamino)-2-deoxy-alpha-D-glucopyranoside site. Acetyl-CoA-binding positions include 243–245 (LGV) and 250–256 (AARGLGS). 1D-myo-inositol 2-(L-cysteinylamino)-2-deoxy-alpha-D-glucopyranoside is bound at residue Tyr-277.

Belongs to the acetyltransferase family. MshD subfamily. In terms of assembly, monomer.

It carries out the reaction 1D-myo-inositol 2-(L-cysteinylamino)-2-deoxy-alpha-D-glucopyranoside + acetyl-CoA = mycothiol + CoA + H(+). Catalyzes the transfer of acetyl from acetyl-CoA to desacetylmycothiol (Cys-GlcN-Ins) to form mycothiol. The polypeptide is Mycothiol acetyltransferase (Clavibacter michiganensis subsp. michiganensis (strain NCPPB 382)).